Here is a 390-residue protein sequence, read N- to C-terminus: Galactokinase (390 aa).

33-36 is a substrate binding site; that stretch reads EHTD. Residues serine 67 and 124–130 contribute to the ATP site; that span reads GSGLSSS. Mg(2+)-binding residues include serine 130 and glutamate 162. Aspartate 174 functions as the Proton acceptor in the catalytic mechanism. Position 224 (tyrosine 224) interacts with substrate.

The protein belongs to the GHMP kinase family. GalK subfamily.

Its subcellular location is the cytoplasm. The enzyme catalyses alpha-D-galactose + ATP = alpha-D-galactose 1-phosphate + ADP + H(+). The protein operates within carbohydrate metabolism; galactose metabolism. Functionally, catalyzes the transfer of the gamma-phosphate of ATP to D-galactose to form alpha-D-galactose-1-phosphate (Gal-1-P). The sequence is that of Galactokinase from Streptococcus suis (strain 05ZYH33).